A 348-amino-acid polypeptide reads, in one-letter code: Bombesin receptor-activated protein C6orf89 homolog (348 aa).

At 1-58 (MDLAANEISIYDKLSETVDLVRQTGHQCGMSEKAIEKFIRQLLEKNEPQRGPPQYPLL) the chain is on the cytoplasmic side. Residues 59-79 (IAVYKVLLTLGLILFTAYFVI) form a helical membrane-spanning segment. Over 80–348 (QPFSSLAPEP…ICDGTTLSDL (269 aa)) the chain is Extracellular.

In terms of assembly, homodimer. Interacts with BRS3. Interacts (via N-terminus) with SIN3B. Glycosylated.

It is found in the golgi apparatus membrane. Its subcellular location is the cytoplasm. Functionally, exhibits histone deacetylase (HDAC) enhancer properties. May play a role in cell cycle progression and wound repair of bronchial epithelial cells. This chain is Bombesin receptor-activated protein C6orf89 homolog, found in Mus musculus (Mouse).